Here is a 381-residue protein sequence, read N- to C-terminus: Putative acetyl-CoA C-acetyltransferase VraB (381 aa).

The Acyl-thioester intermediate role is filled by Cys-86. Catalysis depends on His-338, which acts as the Proton acceptor.

Belongs to the thiolase-like superfamily. Thiolase family.

The chain is Putative acetyl-CoA C-acetyltransferase VraB (vraB) from Staphylococcus haemolyticus (strain JCSC1435).